A 267-amino-acid chain; its full sequence is 3-methyl-2-oxobutanoate hydroxymethyltransferase (267 aa).

Residues Asp-41 and Asp-80 each coordinate Mg(2+). 3-methyl-2-oxobutanoate contacts are provided by residues 41 to 42 (DS), Asp-80, and Lys-109. Mg(2+) is bound at residue Glu-111. Glu-178 (proton acceptor) is an active-site residue.

The protein belongs to the PanB family. In terms of assembly, homodecamer; pentamer of dimers. It depends on Mg(2+) as a cofactor.

Its subcellular location is the cytoplasm. It carries out the reaction 3-methyl-2-oxobutanoate + (6R)-5,10-methylene-5,6,7,8-tetrahydrofolate + H2O = 2-dehydropantoate + (6S)-5,6,7,8-tetrahydrofolate. Its pathway is cofactor biosynthesis; (R)-pantothenate biosynthesis; (R)-pantoate from 3-methyl-2-oxobutanoate: step 1/2. Functionally, catalyzes the reversible reaction in which hydroxymethyl group from 5,10-methylenetetrahydrofolate is transferred onto alpha-ketoisovalerate to form ketopantoate. This Kosmotoga olearia (strain ATCC BAA-1733 / DSM 21960 / TBF 19.5.1) protein is 3-methyl-2-oxobutanoate hydroxymethyltransferase.